A 282-amino-acid polypeptide reads, in one-letter code: Shikimate dehydrogenase (NADP(+)) (282 aa).

Residues 15–17 (SKS) and Thr62 each bind shikimate. Lys66 serves as the catalytic Proton acceptor. Asn87 and Asp103 together coordinate shikimate. NADP(+) contacts are provided by residues 127–131 (GAGGA), 151–156 (NRTHTK), and Met220. Tyr222 serves as a coordination point for shikimate. Gly244 lines the NADP(+) pocket.

This sequence belongs to the shikimate dehydrogenase family. As to quaternary structure, homodimer.

The enzyme catalyses shikimate + NADP(+) = 3-dehydroshikimate + NADPH + H(+). The protein operates within metabolic intermediate biosynthesis; chorismate biosynthesis; chorismate from D-erythrose 4-phosphate and phosphoenolpyruvate: step 4/7. Functionally, involved in the biosynthesis of the chorismate, which leads to the biosynthesis of aromatic amino acids. Catalyzes the reversible NADPH linked reduction of 3-dehydroshikimate (DHSA) to yield shikimate (SA). In Shewanella baltica (strain OS155 / ATCC BAA-1091), this protein is Shikimate dehydrogenase (NADP(+)).